Reading from the N-terminus, the 328-residue chain is DNA-directed RNA polymerase subunit alpha (328 aa).

The tract at residues 1–233 (MHNSATEFLK…EQLEAFIDLR (233 aa)) is alpha N-terminal domain (alpha-NTD). An alpha C-terminal domain (alpha-CTD) region spans residues 247–328 (FDPVLLRPVD…WPPVSILKND (82 aa)).

Belongs to the RNA polymerase alpha chain family. As to quaternary structure, homodimer. The RNAP catalytic core consists of 2 alpha, 1 beta, 1 beta' and 1 omega subunit. When a sigma factor is associated with the core the holoenzyme is formed, which can initiate transcription.

The catalysed reaction is RNA(n) + a ribonucleoside 5'-triphosphate = RNA(n+1) + diphosphate. DNA-dependent RNA polymerase catalyzes the transcription of DNA into RNA using the four ribonucleoside triphosphates as substrates. The sequence is that of DNA-directed RNA polymerase subunit alpha from Wigglesworthia glossinidia brevipalpis.